We begin with the raw amino-acid sequence, 75 residues long: UPF0352 protein VSAL_I1058 (75 aa).

Belongs to the UPF0352 family.

The chain is UPF0352 protein VSAL_I1058 from Aliivibrio salmonicida (strain LFI1238) (Vibrio salmonicida (strain LFI1238)).